The chain runs to 144 residues: Subtilisin inhibitor (144 aa).

Over residues 1–12 the composition is skewed to low complexity; that stretch reads MRNTGAGPSPSV. A disordered region spans residues 1 to 25; sequence MRNTGAGPSPSVSRPPPSAAPLSGA. The signal sequence occupies residues 1–31; that stretch reads MRNTGAGPSPSVSRPPPSAAPLSGAALAAPG. 2 repeats span residues 33–37 and 39–43; these read APSAL. Intrachain disulfides connect cysteine 66-cysteine 81 and cysteine 102-cysteine 132.

This sequence belongs to the protease inhibitor I16 (SSI) family. As to quaternary structure, homodimer.

Its subcellular location is the secreted. In terms of biological role, strong inhibitor of bacterial serine proteases such as subtilisin. This Streptomyces albogriseolus protein is Subtilisin inhibitor (ssi).